A 169-amino-acid polypeptide reads, in one-letter code: Heat shock protein beta-7 (169 aa).

The disordered stretch occupies residues 1-37 (MSHRTSSAFRAERSFRSSSSSSSSSSSSASRALPAQD). Residues 1 to 70 (MSHRTSSAFR…PLAFPARPGG (70 aa)) form a required for localization to SC35 splicing speckles region. A compositionally biased stretch (low complexity) spans 16-32 (RSSSSSSSSSSSSASRA). Residues 61 to 169 (PLAFPARPGG…QQTFRTEIKI (109 aa)) enclose the sHSP domain.

It belongs to the small heat shock protein (HSP20) family. In terms of assembly, interacts with C-terminal domain of actin-binding protein 280. As to expression, found in both cardiac and slow skeletal (soleus) muscle.

The protein resides in the cytoplasm. It localises to the nucleus. It is found in the cajal body. The chain is Heat shock protein beta-7 (Hspb7) from Mus musculus (Mouse).